The chain runs to 65 residues: Small hydrophobic protein (65 aa).

The Intravirion segment spans residues 1–20 (MGNTSITIEFTSKFWPYFTL). The tract at residues 6–15 (ITIEFTSKFW) is interaction with host BCAP31. A helical; Signal-anchor for type II membrane protein membrane pass occupies residues 21 to 44 (IHMILTPISLLIIITIMIAILNKL). Residues 38-43 (IAILNK) form an interaction with small-molecule inhibitor region. Residues 45-65 (SEHKTFCNKTLELGQMYQINT) lie on the Virion surface side of the membrane. Asparagine 52 carries N-linked (GlcNAc...) asparagine; by host glycosylation.

This sequence belongs to the orthopneumovirus small hydrophobic protein family. As to quaternary structure, homopentamer forming a funnel-like pore. Interacts with glycoprotein G; this interaction occurs on the surface of virion particles and infected cells. Interacts with host BCAP31 (via C-terminus); this interaction is direct. Four species of SH have been detected in infected cell cytoplasm: a 7.5 kDa non-glycosylated form (SH0), a 13-15 kDa form that contains one or two N-linked carbohydrate side chains of the high-mannose type (SHg), a 21-30 kDa polylactosaminoglycan-modified form of the protein (SHp), and the isoform generated by alternative translational initiation. Of these different forms, SH0 is by far the most abundant protein detected during virus infection. Post-translationally, tyrosine phosphorylated.

The protein localises to the virion membrane. It is found in the host cell membrane. The protein resides in the host Golgi apparatus membrane. Its subcellular location is the host endoplasmic reticulum membrane. Channel activity is inhibited by copper. Also inhibited by small-molecule pyronin B. Its function is as follows. Viroporin that forms a homopentameric ion channel displaying low ion selectivity. May play a role in virus morphogenesis and pathogenicity at various stages of the viral life cycle. Accumulates at the membrane of the Golgi apparatus in infected cells and may facilitate virus release by modifying the secretory pathway. May enhance host membrane permeability and disrupt cellular ion homeostasis, which can be sensed as damage-associated molecular patterns/danger signals, triggering NLRP3 inflammasome activation and inflammatory immune response. Also inhibits host TNFA-mediated signaling pathway and may delay apoptosis, allowing time for the virus to replicate. This Human respiratory syncytial virus B (strain 18537) protein is Small hydrophobic protein.